The following is a 159-amino-acid chain: NADH-quinone oxidoreductase subunit B (159 aa).

C36, C37, C102, and C132 together coordinate [4Fe-4S] cluster.

This sequence belongs to the complex I 20 kDa subunit family. In terms of assembly, NDH-1 is composed of 14 different subunits. Subunits NuoB, C, D, E, F, and G constitute the peripheral sector of the complex. Requires [4Fe-4S] cluster as cofactor.

The protein localises to the cell inner membrane. The catalysed reaction is a quinone + NADH + 5 H(+)(in) = a quinol + NAD(+) + 4 H(+)(out). NDH-1 shuttles electrons from NADH, via FMN and iron-sulfur (Fe-S) centers, to quinones in the respiratory chain. The immediate electron acceptor for the enzyme in this species is believed to be ubiquinone. Couples the redox reaction to proton translocation (for every two electrons transferred, four hydrogen ions are translocated across the cytoplasmic membrane), and thus conserves the redox energy in a proton gradient. The chain is NADH-quinone oxidoreductase subunit B from Acidovorax ebreus (strain TPSY) (Diaphorobacter sp. (strain TPSY)).